The primary structure comprises 355 residues: Probable dual-specificity RNA methyltransferase RlmN (355 aa).

Glu107 acts as the Proton acceptor in catalysis. The region spanning 113–341 (TDKRLTVCVS…VSVRYSRGLE (229 aa)) is the Radical SAM core domain. Cys120 and Cys346 are disulfide-bonded. 3 residues coordinate [4Fe-4S] cluster: Cys127, Cys131, and Cys134. S-adenosyl-L-methionine is bound by residues 174–175 (GE), Ser204, 227–229 (SLH), and Asn303. Cys346 functions as the S-methylcysteine intermediate in the catalytic mechanism.

Belongs to the radical SAM superfamily. RlmN family. [4Fe-4S] cluster serves as cofactor.

It is found in the cytoplasm. The enzyme catalyses adenosine(2503) in 23S rRNA + 2 reduced [2Fe-2S]-[ferredoxin] + 2 S-adenosyl-L-methionine = 2-methyladenosine(2503) in 23S rRNA + 5'-deoxyadenosine + L-methionine + 2 oxidized [2Fe-2S]-[ferredoxin] + S-adenosyl-L-homocysteine. It carries out the reaction adenosine(37) in tRNA + 2 reduced [2Fe-2S]-[ferredoxin] + 2 S-adenosyl-L-methionine = 2-methyladenosine(37) in tRNA + 5'-deoxyadenosine + L-methionine + 2 oxidized [2Fe-2S]-[ferredoxin] + S-adenosyl-L-homocysteine. Its function is as follows. Specifically methylates position 2 of adenine 2503 in 23S rRNA and position 2 of adenine 37 in tRNAs. The polypeptide is Probable dual-specificity RNA methyltransferase RlmN (Trichormus variabilis (strain ATCC 29413 / PCC 7937) (Anabaena variabilis)).